A 507-amino-acid polypeptide reads, in one-letter code: Myocyte-specific enhancer factor 2A (507 aa).

In terms of domain architecture, MADS-box spans 3-57 (RKKIQITRIMDERNRQVTFTKRKFGLMKKAYELSVLCDCEIALIIFNSSNKLFQY). The segment at residues 58 to 86 (ASTDMDKVLLKYTEYNEPHESGTNSDIVE) is a DNA-binding region (mef2-type). Residue serine 59 is modified to Phosphoserine; by CK2. A phosphoserine mark is found at serine 98 and serine 235. The segment at 175–269 (ADSSMLSPPQ…GGGNLGMNSR (95 aa)) is disordered. Positions 209–245 (LSTSDLTVPNGAGSSPVGNGFVNSRASPNLVGTTGAN) are enriched in polar residues. The residue at position 249 (lysine 249) is an N6-acetyllysine. Residue serine 255 is modified to Phosphoserine. The segment at 266–283 (MNSRKPDLRVVIPPSSKG) is required for interaction with MAPKs. The tract at residues 289–296 (SEEEELEL) is beta domain. Phosphothreonine; by MAPK7 and MAPK14 is present on residues threonine 312 and threonine 319. Serine 355 carries the phosphoserine; by MAPK7 modification. A compositionally biased stretch (polar residues) spans 390–402 (SNLSINTNQNINI). The disordered stretch occupies residues 390–507 (SNLSINTNQN…KRMRMDAWVT (118 aa)). Lysine 403 bears the N6-acetyllysine; alternate mark. A Glycyl lysine isopeptide (Lys-Gly) (interchain with G-Cter in SUMO); alternate cross-link involves residue lysine 403. Serine 408 bears the Phosphoserine; by CDK5 mark. Position 415 is a phosphothreonine (threonine 415). Pro residues predominate over residues 423–443 (QPPPPSQAPQPQPPQPQPQPQ). Residue serine 453 is modified to Phosphoserine. Positions 453–466 (SPVDSLSSSSSSYD) are enriched in low complexity. 2 stretches are compositionally biased toward basic and acidic residues: residues 467 to 477 (GSDREDPRGDF) and 488 to 507 (NTEDRESPSVKRMRMDAWVT).

The protein belongs to the MEF2 family. As to quaternary structure, binds DNA as a homo- or heterodimer. Dimerizes with MEF2D. Interacts with HDAC7. Interacts with PIAS1; the interaction enhances sumoylation. Interacts with HDAC4, HDAC9 and SLC2A4RG. Interacts (via the N-terminal) with MAPK7; the interaction results in the phosphorylation and transcriptional activity of MEF2A. Post-translationally, constitutive phosphorylation on Ser-408 promotes Lys-403 sumoylation thus preventing acetylation at this site. Dephosphorylation on Ser-408 by PPP3CA upon neuron depolarization promotes a switch from sumoylation to acetylation on residue Lys-403 leading to inhibition of dendrite claw differentiation. Phosphorylation on Thr-312 and Thr-319 are the main sites involved in p38 MAPK signaling and activate transcription. Phosphorylated on these sites by MAPK14/p38alpha and MAPK11/p38beta, but not by MAPK13/p38delta nor by MAPK12/p38gamma. Phosphorylation on Ser-408 by CDK5 induced by neurotoxicity inhibits MEF2A transcriptional activation leading to apoptosis of cortical neurons. Phosphorylation on Thr-312, Thr-319 and Ser-355 can be induced by EGF. Sumoylation on Lys-403 is enhanced by PIAS1 and represses transcriptional activity. Phosphorylation on Ser-408 is required for sumoylation. Has no effect on nuclear location nor on DNA binding. Sumoylated with SUMO1 and, to a lesser extent with SUMO2 and SUMO3. PIASx facilitates sumoylation in postsynaptic dendrites in the cerebellar cortex and promotes their morphogenesis. In terms of processing, acetylation on Lys-403 activates transcriptional activity. Acetylated by p300 on several sites in diffentiating myocytes. Acetylation on Lys-4 increases DNA binding and transactivation. Hyperacetylation by p300 leads to enhanced cardiac myocyte growth and heart failure. Post-translationally, proteolytically cleaved on several sites by caspase 3 and caspase 7 following neurotoxicity. Preferentially cleaves the CDK5-mediated hyperphosphorylated form which leads to cortical neuron apoptosis and transcriptional inactivation.

The protein resides in the nucleus. Its function is as follows. Transcriptional activator which binds specifically to the MEF2 element, 5'-YTA[AT](4)TAR-3', found in numerous muscle-specific genes. Also involved in the activation of numerous growth factor- and stress-induced genes. Mediates cellular functions not only in skeletal and cardiac muscle development, but also in neuronal differentiation and survival. Plays diverse roles in the control of cell growth, survival and apoptosis via p38 MAPK signaling in muscle-specific and/or growth factor-related transcription. In cerebellar granule neurons, phosphorylated and sumoylated MEF2A represses transcription of NUR77 promoting synaptic differentiation. Associates with chromatin to the ZNF16 promoter. The protein is Myocyte-specific enhancer factor 2A (MEF2A) of Sus scrofa (Pig).